The sequence spans 624 residues: MEASTSLLVLVLAAAAFAAGTVTEAAGDGCSAGCDLALASFYVTPNQNVTNMADLFGIGAANYRSLAPYNPNIPNLDFINVGGRVNVYFTCGCRSLPGSPGATYLAGAFPFQMSRGQIYTSVAANYNNLTTAEWLQATNSYPANNIPDTAVINATVNCSCGDASISPDYGLFLTYPLRAEDTLASVAATYGLSSQLDVVRRYNPGMESATGSGIVYIPVKDPNGSYLPLKSPGKGASAGAIAGGVVAGVVVLAAIFLYIIFYRRRKAKQATLLQSSEDSTQLGTISMDKVTPSTIVGPSPVAGITVDKSVEFSYEELSNATQGFSIGNKIGQGGFGAVYYAELRGEKAAIKKMDMQATHEFLAELKVLTHVHHLNLVRLIGYCIESSLFLVYEFIENGNLSQHLRGMGYEPLSWAARIQIALDSARGLEYIHEHTVPVYIHRDIKSANILIDKNYRAKVADFGLTKLTEVGGTSMPTGTRVVGTFGYMPPEYARYGDVSPKVDVYAFGVVLYELISAKEAIVRSTESSSDSKGLVYLFEEALNSPDPKEGLRTLIDPKLGEDYPIDSILKLTQLAKVCTQEDPKLRPSMRSVVVALMTLSSTSEFWDMNNLYENQGLVNLMSGR.

A signal peptide spans 1 to 18; it reads MEASTSLLVLVLAAAAFA. The Extracellular portion of the chain corresponds to 19–240; the sequence is AGTVTEAAGD…SPGKGASAGA (222 aa). 3 cysteine pairs are disulfide-bonded: cysteine 30–cysteine 93, cysteine 34–cysteine 160, and cysteine 91–cysteine 158. Asparagine 48 is a glycosylation site (N-linked (GlcNAc...) asparagine). 115–121 contributes to the chitin binding site; the sequence is RGQIYTS. A glycan (N-linked (GlcNAc...) asparagine) is linked at asparagine 128. Position 142–148 (142–148) interacts with chitin; sequence PANNIPD. Asparagine 153 and asparagine 157 each carry an N-linked (GlcNAc...) asparagine glycan. The LysM domain maps to 173-218; it reads LTYPLRAEDTLASVAATYGLSSQLDVVRRYNPGMESATGSGIVYIP. A glycan (N-linked (GlcNAc...) asparagine) is linked at asparagine 223. The chain crosses the membrane as a helical span at residues 241–261; the sequence is IAGGVVAGVVVLAAIFLYIIF. At 262 to 624 the chain is on the cytoplasmic side; the sequence is YRRRKAKQAT…QGLVNLMSGR (363 aa). A Protein kinase domain is found at 324–599; that stretch reads FSIGNKIGQG…RSVVVALMTL (276 aa). Residues 330 to 338 and lysine 351 each bind ATP; that span reads IGQGGFGAV. The Proton acceptor role is filled by aspartate 443.

Belongs to the protein kinase superfamily. Ser/Thr protein kinase family. Homooligomer. Interacts with CEBIP. Interacts with LYP4 and LYP6. Interacts with RLCK176. Autophosphorylated; induced by chitin and derivatives. As to expression, expressed in seedlings, roots, shoots and stems, and, to a lower extent, in flowers.

The protein localises to the cell membrane. The catalysed reaction is L-seryl-[protein] + ATP = O-phospho-L-seryl-[protein] + ADP + H(+). It carries out the reaction L-threonyl-[protein] + ATP = O-phospho-L-threonyl-[protein] + ADP + H(+). Functionally, lysin motif (LysM) receptor kinase required as a cell surface receptor for chitin elicitor (chitooligosaccharides) signaling leading to innate immunity in response to biotic stresses. Involved in the resistance to pathogenic fungi, probably by sensing microbe-associated molecular patterns (MAMP) and pathogen-associated molecular patterns (PAMP). Involved in the detection of microbial peptidoglycans (PGNs) and mediates PGN response. Plays dual roles in PGN and chitin signaling during innate immunity. Acts as an adapter for LYP4 and LYP6 and mediates signal transduction from the extracellular to intracellular spaces. Participates in the activation of defense genes during response to PGN and chitin. Phosphorylates the downstream partner RLCK185 in response to chitin elicitation. This chain is Chitin elicitor receptor kinase 1, found in Oryza sativa subsp. japonica (Rice).